The chain runs to 156 residues: Superoxide dismutase [Cu-Zn] 2 (156 aa).

Positions 47, 49, and 64 each coordinate Cu cation. Cys58 and Cys147 form a disulfide bridge. Zn(2+) contacts are provided by His64, His72, His81, and Asp84. Cu cation is bound at residue His121.

The protein belongs to the Cu-Zn superoxide dismutase family. As to quaternary structure, homodimer. Requires Cu cation as cofactor. Zn(2+) is required as a cofactor.

It localises to the cytoplasm. The catalysed reaction is 2 superoxide + 2 H(+) = H2O2 + O2. Destroys radicals which are normally produced within the cells and which are toxic to biological systems. The chain is Superoxide dismutase [Cu-Zn] 2 (SODCC.2) from Mesembryanthemum crystallinum (Common ice plant).